A 344-amino-acid polypeptide reads, in one-letter code: Dihydroorotase (344 aa).

Zn(2+) contacts are provided by His-13 and His-15. Substrate-binding positions include 15–17 (HLR) and Asn-41. Zn(2+) is bound by residues Lys-99, His-136, and His-174. N6-carboxylysine is present on Lys-99. His-136 provides a ligand contact to substrate. Leu-219 is a substrate binding site. Asp-247 lines the Zn(2+) pocket. Asp-247 is a catalytic residue. Substrate contacts are provided by His-251 and Ala-263.

Belongs to the metallo-dependent hydrolases superfamily. DHOase family. Class II DHOase subfamily. Homodimer. Requires Zn(2+) as cofactor.

The catalysed reaction is (S)-dihydroorotate + H2O = N-carbamoyl-L-aspartate + H(+). It participates in pyrimidine metabolism; UMP biosynthesis via de novo pathway; (S)-dihydroorotate from bicarbonate: step 3/3. In terms of biological role, catalyzes the reversible cyclization of carbamoyl aspartate to dihydroorotate. The polypeptide is Dihydroorotase (Acinetobacter baumannii (strain AB307-0294)).